A 153-amino-acid polypeptide reads, in one-letter code: uncharacterized protein (153 aa).

Ala2 carries the N-acetylalanine modification.

This is an uncharacterized protein from Arabidopsis thaliana (Mouse-ear cress).